Consider the following 491-residue polypeptide: MATQWEVVIGLETHAQLSTVSKIFSGAATQFGAAPNTQACPVDLALPGVLPVMNKGAVERAIQFGLAIDATIAPRSIFARKNYFYPDLPKGYQISQYEIPVVQGGQITIQVPANEKAGKEAYEKTINLTRAHLEEDAGKSLHEDFAGMTGIDLNRAGTPLLEIVTEPEMRSAAEAVAYAKALHGLVVWLGICDGNMQEGSFRCDANVSVRPVGQKEFGTRAEIKNLNSFRFLEEAIQYEVRRQIELIEDGGTVVQETRLYDPDKRETRSMRSKEDAHDYRYFPDPDLMPLVIDASWVERVKGELPELPAAMQKRFVDQYGLTPYDAGVVTAGKAMAAYYEAVVAKVGAAQAKVAANWLMGEVSSQLNREGLDIADSPVSAAQLALVLQRIADGTISNKIAKEIFLAIWEEKATDEAAADRIIEAKGLKQISDTGALEAIIDEVLAANQKSVEEFRAGKEKAFNALIGQAMKATKGKANPQQVNELLKKKLG.

This sequence belongs to the GatB/GatE family. GatB subfamily. Heterotrimer of A, B and C subunits.

The enzyme catalyses L-glutamyl-tRNA(Gln) + L-glutamine + ATP + H2O = L-glutaminyl-tRNA(Gln) + L-glutamate + ADP + phosphate + H(+). It carries out the reaction L-aspartyl-tRNA(Asn) + L-glutamine + ATP + H2O = L-asparaginyl-tRNA(Asn) + L-glutamate + ADP + phosphate + 2 H(+). Functionally, allows the formation of correctly charged Asn-tRNA(Asn) or Gln-tRNA(Gln) through the transamidation of misacylated Asp-tRNA(Asn) or Glu-tRNA(Gln) in organisms which lack either or both of asparaginyl-tRNA or glutaminyl-tRNA synthetases. The reaction takes place in the presence of glutamine and ATP through an activated phospho-Asp-tRNA(Asn) or phospho-Glu-tRNA(Gln). The polypeptide is Aspartyl/glutamyl-tRNA(Asn/Gln) amidotransferase subunit B (Paraburkholderia phymatum (strain DSM 17167 / CIP 108236 / LMG 21445 / STM815) (Burkholderia phymatum)).